The primary structure comprises 313 residues: 4-diphosphocytidyl-2-C-methyl-D-erythritol kinase (313 aa).

Lys27 is an active-site residue. 110–120 (PIGGGVGGGSS) lines the ATP pocket. Asp152 is an active-site residue.

Belongs to the GHMP kinase family. IspE subfamily.

The enzyme catalyses 4-CDP-2-C-methyl-D-erythritol + ATP = 4-CDP-2-C-methyl-D-erythritol 2-phosphate + ADP + H(+). Its pathway is isoprenoid biosynthesis; isopentenyl diphosphate biosynthesis via DXP pathway; isopentenyl diphosphate from 1-deoxy-D-xylulose 5-phosphate: step 3/6. Catalyzes the phosphorylation of the position 2 hydroxy group of 4-diphosphocytidyl-2C-methyl-D-erythritol. This is 4-diphosphocytidyl-2-C-methyl-D-erythritol kinase from Histophilus somni (strain 2336) (Haemophilus somnus).